The chain runs to 585 residues: A-type ATP synthase subunit A (585 aa).

ATP is bound at residue 235 to 242 (GPFGSGKT).

It belongs to the ATPase alpha/beta chains family. Has multiple subunits with at least A(3), B(3), C, D, E, F, H, I and proteolipid K(x).

Its subcellular location is the cell membrane. It catalyses the reaction ATP + H2O + 4 H(+)(in) = ADP + phosphate + 5 H(+)(out). Functionally, component of the A-type ATP synthase that produces ATP from ADP in the presence of a proton gradient across the membrane. The A chain is the catalytic subunit. This is A-type ATP synthase subunit A from Halobacterium salinarum (strain ATCC 29341 / DSM 671 / R1).